A 35-amino-acid polypeptide reads, in one-letter code: Mu-theraphotoxin-Hhn1a (35 aa).

3 disulfide bridges follow: cysteine 2–cysteine 17, cysteine 9–cysteine 24, and cysteine 16–cysteine 31.

It belongs to the neurotoxin 10 (Hwtx-1) family. 22 (Htx-4) subfamily. Monomer. In terms of tissue distribution, expressed by the venom gland.

It localises to the secreted. Functionally, inhibits selectively tetrodotoxin-sensitive voltage-gated sodium channels (Nav). Does not act by binding to receptor site 3 to slow the inactivation kinetics of sodium currents. The chain is Mu-theraphotoxin-Hhn1a from Cyriopagopus hainanus (Chinese bird spider).